A 179-amino-acid polypeptide reads, in one-letter code: Large ribosomal subunit protein bL9 (179 aa).

This sequence belongs to the bacterial ribosomal protein bL9 family.

In terms of biological role, binds to the 23S rRNA. The chain is Large ribosomal subunit protein bL9 from Bartonella bacilliformis (strain ATCC 35685 / KC583 / Herrer 020/F12,63).